The primary structure comprises 229 residues: Probable methylthioribulose-1-phosphate dehydratase (229 aa).

C97 lines the substrate pocket. The Zn(2+) site is built by H115 and H117. Residue E139 is the Proton donor/acceptor of the active site. H195 serves as a coordination point for Zn(2+).

It belongs to the aldolase class II family. MtnB subfamily. The cofactor is Zn(2+).

The protein localises to the cytoplasm. The catalysed reaction is 5-(methylsulfanyl)-D-ribulose 1-phosphate = 5-methylsulfanyl-2,3-dioxopentyl phosphate + H2O. It functions in the pathway amino-acid biosynthesis; L-methionine biosynthesis via salvage pathway; L-methionine from S-methyl-5-thio-alpha-D-ribose 1-phosphate: step 2/6. Its function is as follows. Catalyzes the dehydration of methylthioribulose-1-phosphate (MTRu-1-P) into 2,3-diketo-5-methylthiopentyl-1-phosphate (DK-MTP-1-P). The protein is Probable methylthioribulose-1-phosphate dehydratase of Acyrthosiphon pisum (Pea aphid).